The following is a 347-amino-acid chain: GMP reductase (347 aa).

Position 108 to 131 (108 to 131 (ADFEKTVQILALDPALNFVCIDVA)) interacts with NADP(+). Residues G181 and G183 each contribute to the K(+) site. C186 (thioimidate intermediate) is an active-site residue. Residue 216-239 (IVSDGGCTMPGDVAKAFGGGADFV) coordinates NADP(+).

Belongs to the IMPDH/GMPR family. GuaC type 1 subfamily. Homotetramer.

The catalysed reaction is IMP + NH4(+) + NADP(+) = GMP + NADPH + 2 H(+). Its function is as follows. Catalyzes the irreversible NADPH-dependent deamination of GMP to IMP. It functions in the conversion of nucleobase, nucleoside and nucleotide derivatives of G to A nucleotides, and in maintaining the intracellular balance of A and G nucleotides. The polypeptide is GMP reductase (Salmonella paratyphi B (strain ATCC BAA-1250 / SPB7)).